Here is a 697-residue protein sequence, read N- to C-terminus: Pentatricopeptide repeat-containing protein 1, mitochondrial (697 aa).

A mitochondrion-targeting transit peptide spans Met-1 to His-36. PPR repeat units lie at residues Arg-257 to Lys-288 and Ser-294 to Phe-328.

Its subcellular location is the mitochondrion. In terms of biological role, mitochondrial RNA-binding protein required for the stability of the cox2 and cox3 mRNAs. The chain is Pentatricopeptide repeat-containing protein 1, mitochondrial (ppr1) from Schizosaccharomyces pombe (strain 972 / ATCC 24843) (Fission yeast).